The sequence spans 165 residues: Endoribonuclease YbeY (165 aa).

The Zn(2+) site is built by His131, His135, and His141.

It belongs to the endoribonuclease YbeY family. It depends on Zn(2+) as a cofactor.

Its subcellular location is the cytoplasm. Functionally, single strand-specific metallo-endoribonuclease involved in late-stage 70S ribosome quality control and in maturation of the 3' terminus of the 16S rRNA. The protein is Endoribonuclease YbeY of Agathobacter rectalis (strain ATCC 33656 / DSM 3377 / JCM 17463 / KCTC 5835 / VPI 0990) (Eubacterium rectale).